Consider the following 395-residue polypeptide: LL-diaminopimelate aminotransferase (395 aa).

Substrate-binding residues include Y14 and G41. Pyridoxal 5'-phosphate-binding positions include Y71, 104–105 (AK), Y128, N174, Y205, and 233–235 (SFS). Substrate is bound by residues K105, Y128, and N174. Residue K236 is modified to N6-(pyridoxal phosphate)lysine. The pyridoxal 5'-phosphate site is built by R244 and N275. N275 and R368 together coordinate substrate.

It belongs to the class-I pyridoxal-phosphate-dependent aminotransferase family. LL-diaminopimelate aminotransferase subfamily. In terms of assembly, homodimer. The cofactor is pyridoxal 5'-phosphate.

The catalysed reaction is (2S,6S)-2,6-diaminopimelate + 2-oxoglutarate = (S)-2,3,4,5-tetrahydrodipicolinate + L-glutamate + H2O + H(+). Its pathway is amino-acid biosynthesis; L-lysine biosynthesis via DAP pathway; LL-2,6-diaminopimelate from (S)-tetrahydrodipicolinate (aminotransferase route): step 1/1. Its function is as follows. Involved in the synthesis of meso-diaminopimelate (m-DAP or DL-DAP), required for both lysine and peptidoglycan biosynthesis. Catalyzes the direct conversion of tetrahydrodipicolinate to LL-diaminopimelate. This chain is LL-diaminopimelate aminotransferase, found in Chlamydia caviae (strain ATCC VR-813 / DSM 19441 / 03DC25 / GPIC) (Chlamydophila caviae).